The sequence spans 392 residues: Protein RecA (392 aa).

A disordered region spans residues 1 to 21 (MALETKPAQDPATEIKHELDP). Residue 83 to 90 (GPESSGKT) coordinates ATP. A disordered region spans residues 372–392 (DAAKDTKATAAPAAKSSRAKA). The span at 379 to 392 (ATAAPAAKSSRAKA) shows a compositional bias: low complexity.

The protein belongs to the RecA family.

Its subcellular location is the cytoplasm. In terms of biological role, can catalyze the hydrolysis of ATP in the presence of single-stranded DNA, the ATP-dependent uptake of single-stranded DNA by duplex DNA, and the ATP-dependent hybridization of homologous single-stranded DNAs. It interacts with LexA causing its activation and leading to its autocatalytic cleavage. This chain is Protein RecA, found in Bifidobacterium breve.